A 151-amino-acid chain; its full sequence is Methylglyoxal synthase (151 aa).

One can recognise an MGS-like domain in the interval 6–151; it reads RTMPAHKHVA…DYDAYLAERT (146 aa). Substrate contacts are provided by residues His19, Lys23, 45–48, and 65–66; these read TGTT and SG. Residue Asp71 is the Proton donor/acceptor of the active site. Residue His98 coordinates substrate.

It belongs to the methylglyoxal synthase family.

It catalyses the reaction dihydroxyacetone phosphate = methylglyoxal + phosphate. In terms of biological role, catalyzes the formation of methylglyoxal from dihydroxyacetone phosphate. The sequence is that of Methylglyoxal synthase from Vibrio campbellii (strain ATCC BAA-1116).